We begin with the raw amino-acid sequence, 128 residues long: Ribosome-binding factor A (128 aa).

It belongs to the RbfA family. In terms of assembly, monomer. Binds 30S ribosomal subunits, but not 50S ribosomal subunits or 70S ribosomes.

The protein resides in the cytoplasm. In terms of biological role, one of several proteins that assist in the late maturation steps of the functional core of the 30S ribosomal subunit. Associates with free 30S ribosomal subunits (but not with 30S subunits that are part of 70S ribosomes or polysomes). Required for efficient processing of 16S rRNA. May interact with the 5'-terminal helix region of 16S rRNA. The protein is Ribosome-binding factor A of Acidithiobacillus ferrooxidans (strain ATCC 23270 / DSM 14882 / CIP 104768 / NCIMB 8455) (Ferrobacillus ferrooxidans (strain ATCC 23270)).